We begin with the raw amino-acid sequence, 182 residues long: Ribosome maturation factor RimM (182 aa).

In terms of domain architecture, PRC barrel spans 106–179 (EGEFHVLDLI…RIEITPPPGL (74 aa)).

The protein belongs to the RimM family. In terms of assembly, binds ribosomal protein uS19.

The protein localises to the cytoplasm. Its function is as follows. An accessory protein needed during the final step in the assembly of 30S ribosomal subunit, possibly for assembly of the head region. Essential for efficient processing of 16S rRNA. May be needed both before and after RbfA during the maturation of 16S rRNA. It has affinity for free ribosomal 30S subunits but not for 70S ribosomes. In Synechococcus elongatus (strain ATCC 33912 / PCC 7942 / FACHB-805) (Anacystis nidulans R2), this protein is Ribosome maturation factor RimM.